We begin with the raw amino-acid sequence, 216 residues long: Cytochrome c oxidase assembly protein CtaG (216 aa).

The segment covering Met1–Pro23 has biased composition (low complexity). The interval Met1–Arg24 is disordered. The Cytoplasmic portion of the chain corresponds to Met1 to Gly26. Residues Arg27–Ala49 traverse the membrane as a helical; Signal-anchor for type II membrane protein segment. Residues Val50–Ile216 are Periplasmic-facing.

The protein belongs to the COX11/CtaG family.

It localises to the cell inner membrane. Functionally, exerts its effect at some terminal stage of cytochrome c oxidase synthesis, probably by being involved in the insertion of the copper B into subunit I. This chain is Cytochrome c oxidase assembly protein CtaG, found in Nitrobacter hamburgensis (strain DSM 10229 / NCIMB 13809 / X14).